We begin with the raw amino-acid sequence, 354 residues long: Glycerol-3-phosphate dehydrogenase [NAD(+)], glycosomal (354 aa).

NAD(+)-binding positions include 15–20 (GSGAFG), F90, K118, and A150. K118 serves as a coordination point for substrate. K203 acts as the Proton acceptor in catalysis. NAD(+) is bound by residues R267 and E293. 267 to 268 (RN) serves as a coordination point for substrate. A Microbody targeting signal motif is present at residues 352-354 (SKM).

It belongs to the NAD-dependent glycerol-3-phosphate dehydrogenase family.

It is found in the glycosome. The catalysed reaction is sn-glycerol 3-phosphate + NAD(+) = dihydroxyacetone phosphate + NADH + H(+). The polypeptide is Glycerol-3-phosphate dehydrogenase [NAD(+)], glycosomal (GPD) (Trypanosoma brucei brucei).